A 595-amino-acid chain; its full sequence is DNA ligase (595 aa).

Residues 32–36, 81–82, and E113 each bind NAD(+); these read DEKYD and SL. The active-site N6-AMP-lysine intermediate is the K115. NAD(+) contacts are provided by R136, E178, K296, and K320. Zn(2+)-binding residues include C414, C417, C432, and C438.

It belongs to the NAD-dependent DNA ligase family. LigA subfamily. The cofactor is Mg(2+). Requires Mn(2+) as cofactor.

It carries out the reaction NAD(+) + (deoxyribonucleotide)n-3'-hydroxyl + 5'-phospho-(deoxyribonucleotide)m = (deoxyribonucleotide)n+m + AMP + beta-nicotinamide D-nucleotide.. DNA ligase that catalyzes the formation of phosphodiester linkages between 5'-phosphoryl and 3'-hydroxyl groups in double-stranded DNA using NAD as a coenzyme and as the energy source for the reaction. It is essential for DNA replication and repair of damaged DNA. The protein is DNA ligase of Blochmanniella pennsylvanica (strain BPEN).